A 222-amino-acid polypeptide reads, in one-letter code: MKQKRYALIVAGGHGLRMGADRPKQFLLLAGLPVLMHTLNRFAPHVDAIVLVLPTDHHAYWQELCRKYDFSVSHRVVAGGNTRFASVRNGLQVVPDGVLVAVHDGVRPLVSAETIDACFDLAELKGAVAPCRPMTESLRYYATDGNYAVDRSRYVTVQTPQTFRSEWLREAYRQPYEEYFTDDCSVYEHHFGRPVALIVGNIENIKLTTPLDLSLAKLLLTS.

Belongs to the IspD/TarI cytidylyltransferase family. IspD subfamily.

It carries out the reaction 2-C-methyl-D-erythritol 4-phosphate + CTP + H(+) = 4-CDP-2-C-methyl-D-erythritol + diphosphate. Its pathway is isoprenoid biosynthesis; isopentenyl diphosphate biosynthesis via DXP pathway; isopentenyl diphosphate from 1-deoxy-D-xylulose 5-phosphate: step 2/6. In terms of biological role, catalyzes the formation of 4-diphosphocytidyl-2-C-methyl-D-erythritol from CTP and 2-C-methyl-D-erythritol 4-phosphate (MEP). This chain is 2-C-methyl-D-erythritol 4-phosphate cytidylyltransferase, found in Porphyromonas gingivalis (strain ATCC 33277 / DSM 20709 / CIP 103683 / JCM 12257 / NCTC 11834 / 2561).